The sequence spans 463 residues: L-seryl-tRNA(Sec) selenium transferase (463 aa).

K295 is modified (N6-(pyridoxal phosphate)lysine).

It belongs to the SelA family. Homodecamer; pentamer of dimers. Binds only one seryl-tRNA(Sec) per dimer. Pyridoxal 5'-phosphate is required as a cofactor.

The protein localises to the cytoplasm. It carries out the reaction L-seryl-tRNA(Sec) + selenophosphate + H(+) = L-selenocysteinyl-tRNA(Sec) + phosphate. Its pathway is aminoacyl-tRNA biosynthesis; selenocysteinyl-tRNA(Sec) biosynthesis; selenocysteinyl-tRNA(Sec) from L-seryl-tRNA(Sec) (bacterial route): step 1/1. Functionally, converts seryl-tRNA(Sec) to selenocysteinyl-tRNA(Sec) required for selenoprotein biosynthesis. This Escherichia coli (strain SMS-3-5 / SECEC) protein is L-seryl-tRNA(Sec) selenium transferase.